Reading from the N-terminus, the 197-residue chain is Probable molybdenum cofactor guanylyltransferase (197 aa).

Residues Leu-10–Gly-12, Lys-22, Asp-73, and Asp-102 each bind GTP. Residue Asp-102 coordinates Mg(2+).

It belongs to the MobA family. It depends on Mg(2+) as a cofactor.

The protein resides in the cytoplasm. The catalysed reaction is Mo-molybdopterin + GTP + H(+) = Mo-molybdopterin guanine dinucleotide + diphosphate. In terms of biological role, transfers a GMP moiety from GTP to Mo-molybdopterin (Mo-MPT) cofactor (Moco or molybdenum cofactor) to form Mo-molybdopterin guanine dinucleotide (Mo-MGD) cofactor. This is Probable molybdenum cofactor guanylyltransferase from Methanothermobacter thermautotrophicus (strain ATCC 29096 / DSM 1053 / JCM 10044 / NBRC 100330 / Delta H) (Methanobacterium thermoautotrophicum).